Reading from the N-terminus, the 1235-residue chain is Phosphorylase b kinase regulatory subunit alpha, liver isoform (1235 aa).

3 positions are modified to phosphoserine: serine 697, serine 731, and serine 737. A calmodulin-binding region spans residues 808 to 838; sequence LSELYGKAGLNQEWGLIRYISGLLRKKVEVL. A compositionally biased stretch (low complexity) spans 976–986; that stretch reads SSASSPAISIH. The segment at 976–1002 is disordered; sequence SSASSPAISIHEVGHTGVTKTERSGIN. A phosphoserine mark is found at serine 984, serine 1016, and serine 1044. Positions 1032-1053 are enriched in low complexity; sequence AYSKSVRSSTPSSPTGTSSSDS. Residues 1032 to 1060 form a disordered region; that stretch reads AYSKSVRSSTPSSPTGTSSSDSGGHHISW. The segment at 1059 to 1099 is calmodulin-binding; the sequence is SWGERQGQWLRRRRLDGAINRVPVGFYQRVWKILQKCHGLS. The S-farnesyl cysteine moiety is linked to residue cysteine 1232.

The protein belongs to the phosphorylase b kinase regulatory chain family. In terms of assembly, hexadecamer of 4 heterotetramers, each composed of alpha, beta, gamma, and delta subunits. Alpha (PHKA1 or PHKA2) and beta (PHKB) are regulatory subunits, gamma (PHKG1 or PHKG2) is the catalytic subunit, and delta is calmodulin. Although the final Cys may be farnesylated, the terminal tripeptide is probably not removed, and the C-terminus is not methylated. As to expression, predominantly expressed in liver and other non-muscle tissues.

The protein resides in the cell membrane. It participates in glycan biosynthesis; glycogen metabolism. With respect to regulation, by phosphorylation of various serine residues and by calcium. In terms of biological role, phosphorylase b kinase catalyzes the phosphorylation of serine in certain substrates, including troponin I. The alpha chain may bind calmodulin. The sequence is that of Phosphorylase b kinase regulatory subunit alpha, liver isoform (PHKA2) from Oryctolagus cuniculus (Rabbit).